The sequence spans 271 residues: MLLILKAIILAIVEGLTEFVPVSSTGHLILVSDVINFKGDYANLFNVVIQLGAILAVVVVYWDKLLNSVKDIFAPDRRGLRFWINIVVACIPAVIFGFSLDDYIDKYLFNPITVAIGLVIGGILMIIVENKYRRRSKTKNIYDMKLRQSIFVGMFQCLALWPGMSRSASTIMGGWIAGLSPVVAAEFSFFLAIPVMVGASGLKLVKSGFYMTNIEFIALIVGFVGAFLVSLVVIEKFIKFLQKKPMRIFAIYRIFIGAILLILAIFKIVTI.

8 consecutive transmembrane segments (helical) span residues 2 to 22 (LLIL…FVPV), 42 to 62 (ANLF…VVYW), 80 to 100 (LRFW…GFSL), 108 to 128 (LFNP…MIIV), 149 to 168 (SIFV…SRSA), 175 to 195 (WIAG…AIPV), 214 to 234 (IEFI…LVVI), and 248 to 268 (IFAI…IFKI).

This sequence belongs to the UppP family.

It localises to the cell membrane. It carries out the reaction di-trans,octa-cis-undecaprenyl diphosphate + H2O = di-trans,octa-cis-undecaprenyl phosphate + phosphate + H(+). Functionally, catalyzes the dephosphorylation of undecaprenyl diphosphate (UPP). Confers resistance to bacitracin. In Clostridium tetani (strain Massachusetts / E88), this protein is Undecaprenyl-diphosphatase.